The primary structure comprises 97 residues: MQAQTFSHLHSQSSQRTTEVTLYLTIPESYRQEPIVTQLVSRYQLQVNILAATLGTNGGQGQFKLTLIGHAQAINNALAYLEQLQVTIVLDQESDGW.

May have a regulatory function. This is an uncharacterized protein from Synechocystis sp. (strain ATCC 27184 / PCC 6803 / Kazusa).